A 255-amino-acid chain; its full sequence is MNINKIALIYNQNSKHLAIIEEIKKLYNYCKIEEAEAIIVIGGDGELLHNIHRYMNLNIPFYGVNLGSLGFLMNPLDTKNLLQNIHESTVSILNPLLMQAEDISGQIYTALAINEVSIFRKTNQAAKFRIDVNGIERMSELVADGALVATPAGSSAYNLSAGGPILPLDSNMLCLTPICSFRPRRWHGALLLSSATIKFEILNTNKRPVNATADFQEFNNITNVTVKSTKDKPIKLLFNKNHTLEDRIIKEQFGG.

The active-site Proton acceptor is D44. Residues 44–45 (DG), H49, 114–115 (NE), D144, A152, 155–160 (SAYNLS), and Q216 each bind NAD(+).

The protein belongs to the NAD kinase family. A divalent metal cation is required as a cofactor.

It localises to the cytoplasm. It carries out the reaction NAD(+) + ATP = ADP + NADP(+) + H(+). Functionally, involved in the regulation of the intracellular balance of NAD and NADP, and is a key enzyme in the biosynthesis of NADP. Catalyzes specifically the phosphorylation on 2'-hydroxyl of the adenosine moiety of NAD to yield NADP. This Rickettsia felis (strain ATCC VR-1525 / URRWXCal2) (Rickettsia azadi) protein is NAD kinase.